The sequence spans 358 residues: Photosystem II protein D1 (358 aa).

The next 3 membrane-spanning stretches (helical) occupy residues tyrosine 28–isoleucine 45, histidine 117–leucine 132, and tryptophan 141–alanine 155. Position 117 (histidine 117) interacts with chlorophyll a. Tryptophan 125 provides a ligand contact to pheophytin a. Positions 169 and 188 each coordinate [CaMn4O5] cluster. A helical transmembrane segment spans residues phenylalanine 196–leucine 217. Residue histidine 197 participates in chlorophyll a binding. A quinone contacts are provided by residues histidine 214 and serine 263–phenylalanine 264. Residue histidine 214 coordinates Fe cation. Residue histidine 271 coordinates Fe cation. A helical membrane pass occupies residues phenylalanine 273–leucine 287. Positions 331, 332, 341, and 343 each coordinate [CaMn4O5] cluster. Residues alanine 344–glycine 358 constitute a propeptide that is removed on maturation.

This sequence belongs to the reaction center PufL/M/PsbA/D family. In terms of assembly, PSII is composed of 1 copy each of membrane proteins PsbA, PsbB, PsbC, PsbD, PsbE, PsbF, PsbH, PsbI, PsbJ, PsbK, PsbL, PsbM, PsbT, PsbX, PsbY, Psb30/Ycf12, peripheral proteins PsbO, CyanoQ (PsbQ), PsbU, PsbV and a large number of cofactors. It forms dimeric complexes. It depends on The D1/D2 heterodimer binds P680, chlorophylls that are the primary electron donor of PSII, and subsequent electron acceptors. It shares a non-heme iron and each subunit binds pheophytin, quinone, additional chlorophylls, carotenoids and lipids. D1 provides most of the ligands for the Mn4-Ca-O5 cluster of the oxygen-evolving complex (OEC). There is also a Cl(-1) ion associated with D1 and D2, which is required for oxygen evolution. The PSII complex binds additional chlorophylls, carotenoids and specific lipids. as a cofactor. In terms of processing, tyr-160 forms a radical intermediate that is referred to as redox-active TyrZ, YZ or Y-Z. Post-translationally, C-terminally processed by CtpA; processing is essential to allow assembly of the oxygen-evolving complex and thus photosynthetic growth.

The protein resides in the cellular thylakoid membrane. The catalysed reaction is 2 a plastoquinone + 4 hnu + 2 H2O = 2 a plastoquinol + O2. Photosystem II (PSII) is a light-driven water:plastoquinone oxidoreductase that uses light energy to abstract electrons from H(2)O, generating O(2) and a proton gradient subsequently used for ATP formation. It consists of a core antenna complex that captures photons, and an electron transfer chain that converts photonic excitation into a charge separation. The D1/D2 (PsbA/PsbD) reaction center heterodimer binds P680, the primary electron donor of PSII as well as several subsequent electron acceptors. The polypeptide is Photosystem II protein D1 (Prochlorococcus marinus (strain MIT 9303)).